A 187-amino-acid chain; its full sequence is uncharacterized protein (187 aa).

Residues 127–172 (KQPQVTLTQLQEELDEAKTRLALKEKELLEALSEISKLRLQLSNQL) are a coiled coil.

This is an uncharacterized protein from Tomato torrado virus (isolate Solanum lycopersicum/Spain/PRIToTV0301/-) (ToTV).